Consider the following 35-residue polypeptide: Cupiennin-1a (35 aa).

At E35 the chain carries Glutamic acid 1-amide.

Belongs to the cationic peptide 04 (cupiennin) family. 01 subfamily. Monomer. Interacts with CSTX-1 (AC P81694), CSTX-9 (AC P58604), and CSTX-13 (AC P83919). In terms of tissue distribution, expressed by the venom gland.

It localises to the secreted. Has antimicrobial activity against B.subtilis, E.coli, E.faecalis, P.denitrificans, P.aeruginosa, P.putida, S.aureus, and S.epidermidis. Shows insecticidal and hemolytic activities. Probably acts by disturbing membrane function with its amphipathic structure. Synergistically increases the insecticidal activity of CSTX-1 (AC P81694), CSTX-9 (AC P58604), and CSTX-13 (AC P83919) by up to 65%. Also inhibits the formation of nitric oxide by neuronal nitric oxide synthase. The protein is Cupiennin-1a of Cupiennius salei (American wandering spider).